The chain runs to 122 residues: Basic phospholipase A2 homolog (122 aa).

Intrachain disulfides connect Cys26/Cys116, Cys28/Cys44, Cys43/Cys96, Cys49/Cys122, Cys50/Cys89, Cys57/Cys82, and Cys75/Cys87. The interval 106–117 is important for membrane-damaging activities in eukaryotes and bacteria; heparin-binding; sequence KKHRVTVKFLCK.

The protein belongs to the phospholipase A2 family. Group II subfamily. K49 sub-subfamily. Homodimer; non-covalently linked. Expressed by the venom gland.

It is found in the secreted. Functionally, snake venom phospholipase A2 (PLA2) that has almost no phospholipase A2 activity. Is myotoxic. Displays edema-inducing activities. A model of myotoxic mechanism has been proposed: an apo Lys49-PLA2 is activated by the entrance of a hydrophobic molecule (e.g. fatty acid) at the hydrophobic channel of the protein leading to a reorientation of a monomer. This reorientation causes a transition between 'inactive' to 'active' states, causing alignment of C-terminal and membrane-docking sites (MDoS) side-by-side and putting the membrane-disruption sites (MDiS) in the same plane, exposed to solvent and in a symmetric position for both monomers. The MDoS region stabilizes the toxin on membrane by the interaction of charged residues with phospholipid head groups. Subsequently, the MDiS region destabilizes the membrane with penetration of hydrophobic residues. This insertion causes a disorganization of the membrane, allowing an uncontrolled influx of ions (i.e. calcium and sodium), and eventually triggering irreversible intracellular alterations and cell death. The protein is Basic phospholipase A2 homolog of Protobothrops mucrosquamatus (Taiwan habu).